The chain runs to 242 residues: Small ribosomal subunit protein eS1 (242 aa).

It belongs to the eukaryotic ribosomal protein eS1 family. In terms of assembly, component of the small ribosomal subunit. Mature ribosomes consist of a small (40S) and a large (60S) subunit. The 40S subunit contains about 33 different proteins and 1 molecule of RNA (18S). The 60S subunit contains about 49 different proteins and 3 molecules of RNA (25S, 5.8S and 5S).

The protein resides in the cytoplasm. This Lodderomyces elongisporus (strain ATCC 11503 / CBS 2605 / JCM 1781 / NBRC 1676 / NRRL YB-4239) (Yeast) protein is Small ribosomal subunit protein eS1.